Reading from the N-terminus, the 293-residue chain is Ribosomal RNA small subunit methyltransferase A (293 aa).

S-adenosyl-L-methionine is bound by residues asparagine 29, leucine 31, glycine 56, glutamate 77, aspartate 102, and asparagine 127.

This sequence belongs to the class I-like SAM-binding methyltransferase superfamily. rRNA adenine N(6)-methyltransferase family. RsmA subfamily.

The protein localises to the cytoplasm. It catalyses the reaction adenosine(1518)/adenosine(1519) in 16S rRNA + 4 S-adenosyl-L-methionine = N(6)-dimethyladenosine(1518)/N(6)-dimethyladenosine(1519) in 16S rRNA + 4 S-adenosyl-L-homocysteine + 4 H(+). Functionally, specifically dimethylates two adjacent adenosines (A1518 and A1519) in the loop of a conserved hairpin near the 3'-end of 16S rRNA in the 30S particle. May play a critical role in biogenesis of 30S subunits. This is Ribosomal RNA small subunit methyltransferase A from Geobacillus thermodenitrificans (strain NG80-2).